A 294-amino-acid polypeptide reads, in one-letter code: Osteopontin (294 aa).

The N-terminal stretch at 1–16 is a signal peptide; the sequence is MRLAVICFCLFGIASS. 13 positions are modified to phosphoserine: serine 24, serine 26, serine 27, serine 61, serine 62, serine 75, serine 77, serine 80, serine 106, serine 109, serine 112, serine 115, and serine 118. The interval 42 to 274 is disordered; sequence WLVPDPSQKQ…LVLDPKSKED (233 aa). Over residues 48-61 the composition is skewed to polar residues; it reads SQKQNLLAPQNAVS. Residues 85–110 are compositionally biased toward acidic residues; that stretch reads DDDDDDDDDDGDHAESEDSVDSDESD. Residues 121–130 show a composition bias toward polar residues; sequence TVTASTQADT. 3 O-linked (GalNAc...) threonine glycosylation sites follow: threonine 123, threonine 132, and threonine 137. A Cell attachment site motif is present at residues 144 to 146; the sequence is RGD. 2 positions are modified to phosphothreonine: threonine 170 and threonine 175. The span at 174-187 shows a compositional bias: basic and acidic residues; the sequence is LTSHMKSGESKESL. Phosphoserine is present on residues serine 176, serine 180, serine 200, serine 209, serine 213, and serine 219. Polar residues predominate over residues 197–216; it reads SMPSDQDNNGKGSHESSQLD. Serine 219 carries O-linked (Xyl...) (chondroitin sulfate) serine glycosylation. Positions 220–232 are enriched in basic and acidic residues; sequence LETHRLEHSKESQ. Residue threonine 222 is modified to Phosphothreonine. 14 positions are modified to phosphoserine: serine 228, serine 231, serine 234, serine 238, serine 243, serine 247, serine 250, serine 255, serine 260, serine 271, serine 283, serine 288, serine 290, and serine 291. Positions 234–249 are enriched in polar residues; that stretch reads SADQSDVIDSQASSKA. Basic and acidic residues predominate over residues 263–274; the sequence is DKLVLDPKSKED. O-linked (Xyl...) (chondroitin sulfate) serine glycosylation is present at serine 288.

The protein belongs to the osteopontin family. In terms of assembly, interacts (via N-terminus) with integrin ITGA9:ITGB1. Extensively phosphorylated by FAM20C in the extracellular medium at multiple sites within the S-x-E/pS motif. The phosphorylated form inhibits hydroxyapatite crystallization. Dephosphorylation via a mechanism involving ALPL/TNAP promotes hydroxyapatite crystallization. In terms of processing, O-glycosylated. Post-translationally, forms covalent cross-links mediated by transglutaminase TGM2, between a glutamine and the epsilon-amino group of a lysine residue, forming homopolymers and heteropolymers, increasing its collagen binding properties.

It localises to the secreted. Major non-collagenous bone protein that binds tightly to hydroxyapatite. Appears to form an integral part of the mineralized matrix. Probably important to cell-matrix interaction. Its function is as follows. Acts as a cytokine involved in enhancing production of interferon-gamma and interleukin-12 and reducing production of interleukin-10 and is essential in the pathway that leads to type I immunity. The protein is Osteopontin (Spp1) of Mus musculus (Mouse).